The sequence spans 569 residues: Urease subunit alpha (569 aa).

In terms of domain architecture, Urease spans 131–569; that stretch reads GGIDTHIHFI…LPLAQRYLLL (439 aa). Ni(2+) contacts are provided by His-136, His-138, and Lys-219. N6-carboxylysine is present on Lys-219. His-221 provides a ligand contact to substrate. Residues His-248 and His-274 each coordinate Ni(2+). The Proton donor role is filled by His-322. Position 362 (Asp-362) interacts with Ni(2+).

It belongs to the metallo-dependent hydrolases superfamily. Urease alpha subunit family. In terms of assembly, heterotrimer of UreA (gamma), UreB (beta) and UreC (alpha) subunits. Three heterotrimers associate to form the active enzyme. Ni cation is required as a cofactor. In terms of processing, carboxylation allows a single lysine to coordinate two nickel ions.

It localises to the cytoplasm. It carries out the reaction urea + 2 H2O + H(+) = hydrogencarbonate + 2 NH4(+). It functions in the pathway nitrogen metabolism; urea degradation; CO(2) and NH(3) from urea (urease route): step 1/1. This is Urease subunit alpha from Synechococcus sp. (strain WH7805).